Consider the following 2203-residue polypeptide: Voltage-dependent L-type calcium channel subunit alpha-1D (2203 aa).

Disordered regions lie at residues 1-51 (MMMM…QTVL) and 64-100 (KAAQ…SSNS). The Cytoplasmic portion of the chain corresponds to 1-126 (MMMMMMMKKM…RACISIVDWK (126 aa)). The segment covering 38-51 (GPTSQPNSSKQTVL) has biased composition (polar residues). A compositionally biased stretch (basic residues) spans 82 to 93 (QRKRQQYAKSKK). The stretch at 112-408 (NNPIRRACIS…NLVLGVLSGE (297 aa)) is one I repeat. The chain crosses the membrane as a helical span at residues 127 to 145 (PFDIFILLAIFANCVALAI). The Extracellular portion of the chain corresponds to 146–163 (YIPFPEDDSNSTNHNLEK). The N-linked (GlcNAc...) asparagine glycan is linked to Asn-155. A helical transmembrane segment spans residues 164-183 (VEYAFLIIFTVETFLKIIAS). Residues 184–195 (GLLLHPNASVRN) lie on the Cytoplasmic side of the membrane. A helical membrane pass occupies residues 196–214 (GWNLLDFVIVIVGLFSVIL). The Extracellular segment spans residues 215 to 235 (EQLTKETEGGNHSSGKSGGFD). Residue Asn-225 is glycosylated (N-linked (GlcNAc...) asparagine). The chain crosses the membrane as a helical span at residues 236–254 (VKALRAFRVLRPLRLVSGV). Residues 255 to 273 (PSLQVVLNSIIKAMVPLLH) are Cytoplasmic-facing. A helical membrane pass occupies residues 274–293 (IALLVLFVIIIYAIIGLELF). Residues 294-381 (IGKMHKTCFF…WVNDAIGWEW (88 aa)) lie on the Extracellular side of the membrane. A glycan (N-linked (GlcNAc...) asparagine) is linked at Asn-329. Ca(2+) is bound at residue Glu-364. The helical transmembrane segment at 382–406 (PWVYFVSLIILGSFFVLNLVLGVLS) threads the bilayer. At 407–582 (GEFSKEREKA…RRCRAAVKSV (176 aa)) the chain is on the cytoplasmic side. Residues 429–446 (QQLEEDLKGYLDWITQAE) are binding to the beta subunit. Residues 449 to 480 (DPENEEEGGEEGKRNTSMPTSETESVNTENVS) are disordered. Polar residues predominate over residues 463–479 (NTSMPTSETESVNTENV). An II repeat occupies 528 to 774 (EALCVCRCSL…DWNAVMYDGI (247 aa)). Residues 583 to 602 (TFYWLVIVLVFLNTLTISSE) traverse the membrane as a helical segment. The Extracellular portion of the chain corresponds to 603–617 (HYNQPDWLTQIQDIA). Residues 618-636 (NKVLLALFTCEMLVKMYSL) form a helical membrane-spanning segment. The Cytoplasmic segment spans residues 637-644 (GLQAYFVS). A helical membrane pass occupies residues 645-663 (LFNRFDCFVVCGGITETIL). The Extracellular portion of the chain corresponds to 664–673 (VELELMSPLG). Residues 674-692 (VSVFRCVRLLRIFKVTRHW) traverse the membrane as a helical segment. The Cytoplasmic segment spans residues 693–711 (TSLSNLVASLLNSMKSIAS). A helical membrane pass occupies residues 712-732 (LLLLLFLFIIIFSLLGMQLFG). Residues 733–786 (GKFNFDETQTKRSTFDNFPQALLTVFQILTGEDWNAVMYDGIMAYGGPSSSGMI) lie on the Extracellular side of the membrane. Glu-764 is a Ca(2+) binding site. The chain crosses the membrane as a helical span at residues 787-811 (VCIYFIILFICGNYILLKLFLAIAV). The Cytoplasmic portion of the chain corresponds to 812 to 945 (DNLADAESLN…VGCHKLINHH (134 aa)). Positions 822 to 909 (TAQKEEAEEK…AGPRPRRISE (88 aa)) are disordered. Residues 824–849 (QKEEAEEKERKKIARKESLENKKNNK) show a composition bias toward basic and acidic residues. The segment covering 850–861 (PEVNQIANSDNK) has biased composition (polar residues). Residues 884 to 897 (VGEEEEEEEEDEPE) show a composition bias toward acidic residues. The III repeat unit spans residues 892–1174 (EEDEPEVPAG…LLYKAIDSNG (283 aa)). Residues 946 to 964 (IFTNLILVFIMLSSAALAA) traverse the membrane as a helical segment. At 965 to 980 (EDPIRSHSFRNTILGY) the chain is on the extracellular side. The helical transmembrane segment at 981–1000 (FDYAFTAIFTVEILLKMTTF) threads the bilayer. Over 1001–1012 (GAFLHKGAFCRN) the chain is Cytoplasmic. A helical membrane pass occupies residues 1013–1031 (YFNLLDMLVVGVSLVSFGI). The Extracellular portion of the chain corresponds to 1032-1037 (QSSAIS). The chain crosses the membrane as a helical span at residues 1038–1057 (VVKILRVLRVLRPLRAINRA). At 1058 to 1076 (KGLKHVVQCVFVAIRTIGN) the chain is on the cytoplasmic side. A helical transmembrane segment spans residues 1077 to 1096 (IMIVTTLLQFMFACIGVQLF). At 1097–1186 (KGKFYRCTDE…VGPVYNYRVE (90 aa)) the chain is on the extracellular side. Residues 1134-1224 (RIWQNSDFNF…QEQGEKEYKN (91 aa)) form a dihydropyridine binding region. Glu-1160 contacts Ca(2+). The chain crosses the membrane as a helical span at residues 1187-1207 (ISIFFIIYIIIVAFFMMNIFV). Over 1208–1264 (GFVIVTFQEQGEKEYKNCELDKNQRQCVEYALKARPLRRYIPKNPYQYKFWYVVNSS) the chain is Cytoplasmic. An IV repeat occupies 1211-1486 (IVTFQEQGEK…YTCGSNFAIV (276 aa)). The helical transmembrane segment at 1265–1283 (PFEYMMFVLIMLNTLCLAM) threads the bilayer. The Extracellular portion of the chain corresponds to 1284 to 1298 (QHYEQSKMFNDAMDI). Residues 1299–1318 (LNMVFTGVFTVEMVLKVIAF) traverse the membrane as a helical segment. The Cytoplasmic portion of the chain corresponds to 1319–1325 (KPKGYFS). The chain crosses the membrane as a helical span at residues 1326–1347 (DAWNTFDSLIVIGSIIDVALSE). The Extracellular portion of the chain corresponds to 1348–1357 (ADNSEESNRI). A helical transmembrane segment spans residues 1358–1377 (SITFFRLFRVMRLVKLLSRG). At 1378 to 1396 (EGIRTLLWTFIKSFQALPY) the chain is on the cytoplasmic side. The chain crosses the membrane as a helical span at residues 1397-1416 (VALLIAMLFFIYAVIGMQMF). The Extracellular portion of the chain corresponds to 1417–1483 (GKVAMRDNNQ…GEEYTCGSNF (67 aa)). The dihydropyridine binding stretch occupies residues 1464-1530 (LCDPDSDYNP…LGPHHLDEFK (67 aa)). The segment at 1476 to 1519 (EYTCGSNFAIVYFISFYMLCAFLIINLFVAVIMDNFDYLTRDWS) is phenylalkylamine binding. The chain crosses the membrane as a helical span at residues 1484-1508 (AIVYFISFYMLCAFLIINLFVAVIM). The Cytoplasmic segment spans residues 1509–2203 (DNFDYLTRDW…ADEMICITTL (695 aa)). 4 disordered regions span residues 1734–1766 (NHVN…PASD), 1795–1816 (TSTN…KRPS), 1920–1963 (FERP…HRRS), and 2176–2195 (GPGY…DLAD). The span at 1795 to 1806 (TSTNANLNNANM) shows a compositional bias: polar residues. Positions 2180-2195 (SDEEPDPGREEEDLAD) are enriched in acidic residues.

This sequence belongs to the calcium channel alpha-1 subunit (TC 1.A.1.11) family. CACNA1D subfamily. As to quaternary structure, voltage-dependent calcium channels are multisubunit complexes, consisting of alpha-1, alpha-2, beta and delta subunits in a 1:1:1:1 ratio. The channel activity is directed by the pore-forming and voltage-sensitive alpha-1 subunit. In many cases, this subunit is sufficient to generate voltage-sensitive calcium channel activity. The auxiliary subunits beta and alpha-2/delta linked by a disulfide bridge regulate the channel activity. Interacts with CABP1 and CABP4, resulting in a near elimination of calcium-dependent inactivation of the channel. Interacts with RIMBP2. As to expression, expressed in brain, pancreatic islets and B-lymphocytes.

The protein localises to the membrane. The enzyme catalyses Ca(2+)(in) = Ca(2+)(out). Functionally, voltage-sensitive calcium channels (VSCC) mediate the entry of calcium ions into excitable cells and are also involved in a variety of calcium-dependent processes, including muscle contraction, hormone or neurotransmitter release, gene expression, cell motility, cell division and cell death. The isoform alpha-1D gives rise to L-type calcium currents. Long-lasting (L-type) calcium channels belong to the 'high-voltage activated' (HVA) group. They are blocked by dihydropyridines (DHP), phenylalkylamines, and by benzothiazepines. In terms of biological role, voltage-sensitive calcium channels (VSCC) mediate the entry of calcium ions into excitable cells and are also involved in a variety of calcium-dependent processes, including muscle contraction, hormone or neurotransmitter release, gene expression, cell motility, cell division and cell death. The isoform alpha-1D gives rise to L-type calcium currents. This is Voltage-dependent L-type calcium channel subunit alpha-1D (Cacna1d) from Rattus norvegicus (Rat).